Reading from the N-terminus, the 593-residue chain is DEAD-box ATP-dependent RNA helicase 18 (593 aa).

Residues 16–44 (FSDLEPPLSGDIIEALNQSDFEFCTPVQA) carry the Q motif motif. The 180-residue stretch at 47–226 (IPLLCSYKDV…KAGLRNPVRV (180 aa)) folds into the Helicase ATP-binding domain. 60–67 (AATGSGKT) is a binding site for ATP. A DEAD box motif is present at residues 174 to 177 (DEAD). One can recognise a Helicase C-terminal domain in the interval 264 to 411 (QLVDLLIKNS…ERKCSEDASD (148 aa)). Over residues 506 to 524 (QRQQNLQVRKEKRQEEKKE) the composition is skewed to basic and acidic residues. Positions 506-561 (QRQQNLQVRKEKRQEEKKEKGKRKRVDASASNDPKKASRKLTGKQRQTIQTAEDEE) are disordered.

This sequence belongs to the DEAD box helicase family. DDX55/SPB4 subfamily.

The catalysed reaction is ATP + H2O = ADP + phosphate + H(+). The sequence is that of DEAD-box ATP-dependent RNA helicase 18 (RH18) from Arabidopsis thaliana (Mouse-ear cress).